The chain runs to 140 residues: Prepilin peptidase-dependent protein A (140 aa).

A propeptide spanning residues 1-23 is cleaved from the precursor; the sequence is MLLLKASAICGKGNEGKRNKKGG. The residue at position 24 (Phe24) is an N-methylphenylalanine. A helical transmembrane segment spans residues 24-44; that stretch reads FTLIELTVVLAIMAIILMVIA.

It localises to the membrane. Not yet known. The polypeptide is Prepilin peptidase-dependent protein A (ppdA) (Clostridium perfringens (strain 13 / Type A)).